Reading from the N-terminus, the 339-residue chain is TATA-box-binding protein (339 aa).

Disordered regions lie at residues 1–21, 36–71, and 127–159; these read MDQN…QGAM, TGLT…QQQQ, and LTTA…SESS. Over residues 38-50 the composition is skewed to polar residues; it reads LTPQPIQNTNSLS. 3 stretches are compositionally biased toward low complexity: residues 57–71, 127–138, and 146–156; these read RQQQ…QQQQ, LTTAPLPGTTPL, and MTPITPATPAS. Repeat copies occupy residues 165 to 241 and 255 to 332. DNA-binding residues include N167, R203, K218, N257, and R294.

It belongs to the TBP family. As to quaternary structure, binds DNA as monomer. Component of the TFIID basal transcription factor complex, composed of TATA-box-binding protein TBP, and a number of TBP-associated factors (TAFs), including TAF1, TAF2, TAF3, TAF4, TAF5, TAF6, TAF7, TAF8, TAF9, TAF10, TAF11, TAF12 and TAF13. Part of a TFIID-containing RNA polymerase II pre-initiation complex that is composed of TBP and at least GTF2A1, GTF2A2, GTF2E1, GTF2E2, GTF2F1, GTF2H2, GTF2H3, GTF2H4, GTF2H5, GTF2B, TCEA1, ERCC2, ERCC3, TAF1, TAF2, TAF3, TAF4, TAF5, TAF6, TAF7, TAF8, TAF9, TAF10, TAF11, TAF12 and TAF13. Component of the transcription factor SL1/TIF-IB complex, composed of TBP and at least TAF1A, TAF1B, TAF1C and TAF1D. Association of TBP to form either TFIID or SL1/TIF-IB appears to be mutually exclusive. Interacts with TAF1A, TAF1B and TAF1C. Interacts with TFIIB, NCOA6, DRAP1, DR1 and ELF3. Interacts with SPIB, SNAPC1, SNAPC2 and SNAPC4. Interacts with UTF1. Interacts with BRF2; this interaction promotes recruitment of BRF2 to TATA box-containing promoters. Interacts with UBTFD. Interacts with GPBP1D. Interacts with CITED2. Interacts with ATF7IP. Interacts with LLPH. Interacts with HSF1 (via transactivation domain). Interacts with GTF2B (via C-terminus); this interaction with promoter-bound TBP guides RNA polymerase II into the pre-initiation complex (PIC). Interacts with PAX5. Interacts with MSX1; the interaction may inhibit MSX1 autoinactivation. (Microbial infection) Interacts with HIV-1 Tat. In terms of assembly, (Microbial infection) Interacts with herpes simplex virus 1 ICP4. As to quaternary structure, (Microbial infection) Interacts with herpes simplex virus 2 ICP4. (Microbial infection) Interacts with human adenovirus E1A protein; this interaction probably disrupts the TBP-TATA complex. In terms of tissue distribution, widely expressed, with levels highest in the testis and ovary.

It localises to the nucleus. Its function is as follows. The TFIID basal transcription factor complex plays a major role in the initiation of RNA polymerase II (Pol II)-dependent transcription. TFIID recognizes and binds promoters with or without a TATA box via its subunit TBP, a TATA-box-binding protein, and promotes assembly of the pre-initiation complex (PIC). The TFIID complex consists of TBP and TBP-associated factors (TAFs), including TAF1, TAF2, TAF3, TAF4, TAF5, TAF6, TAF7, TAF8, TAF9, TAF10, TAF11, TAF12 and TAF13. The TFIID complex structure can be divided into 3 modules TFIID-A, TFIID-B, and TFIID-C. TBP forms the TFIID-A module together with TAF3 and TAF5. TBP is a general transcription factor that functions at the core of the TFIID complex. During assembly of the core PIC on the promoter, as part of TFIID, TBP binds to and also bends promoter DNA, irrespective of whether the promoter contains a TATA box. Component of a BRF2-containing transcription factor complex that regulates transcription mediated by RNA polymerase III. Component of the transcription factor SL1/TIF-IB complex, which is involved in the assembly of the PIC during RNA polymerase I-dependent transcription. The rate of PIC formation probably is primarily dependent on the rate of association of SL1 with the rDNA promoter. SL1 is involved in stabilization of nucleolar transcription factor 1/UBTF on rDNA. This chain is TATA-box-binding protein (TBP), found in Homo sapiens (Human).